The primary structure comprises 357 residues: Aspartate carbamoyltransferase catalytic subunit (357 aa).

Residues 1-15 (MSNSIDSQSLPTVSP) show a composition bias toward polar residues. Positions 1 to 21 (MSNSIDSQSLPTVSPTDYARF) are disordered. Carbamoyl phosphate contacts are provided by Arg-97 and Thr-98. Residue Lys-125 participates in L-aspartate binding. Residues Arg-147, His-177, and Gln-180 each contribute to the carbamoyl phosphate site. L-aspartate contacts are provided by Arg-211 and Arg-266. Positions 307 and 308 each coordinate carbamoyl phosphate.

The protein belongs to the aspartate/ornithine carbamoyltransferase superfamily. ATCase family. In terms of assembly, heterododecamer (2C3:3R2) of six catalytic PyrB chains organized as two trimers (C3), and six regulatory PyrI chains organized as three dimers (R2).

The catalysed reaction is carbamoyl phosphate + L-aspartate = N-carbamoyl-L-aspartate + phosphate + H(+). Its pathway is pyrimidine metabolism; UMP biosynthesis via de novo pathway; (S)-dihydroorotate from bicarbonate: step 2/3. In terms of biological role, catalyzes the condensation of carbamoyl phosphate and aspartate to form carbamoyl aspartate and inorganic phosphate, the committed step in the de novo pyrimidine nucleotide biosynthesis pathway. The chain is Aspartate carbamoyltransferase catalytic subunit from Psychrobacter cryohalolentis (strain ATCC BAA-1226 / DSM 17306 / VKM B-2378 / K5).